We begin with the raw amino-acid sequence, 117 residues long: Ig lambda-1 chain V region (117 aa).

Residues M1–S20 form the signal peptide. The residue at position 21 (Q21) is a Pyrrolidone carboxylic acid. In terms of domain architecture, Ig-like spans Q21–H117.

The polypeptide is Ig lambda-1 chain V region (Mus musculus (Mouse)).